The chain runs to 347 residues: MDFELEPTLESIVEHDSLKWIFVGGKGGVGKTTTSSSIAVQLALSKPNDQFLLISTDPAHNLSDAFCQKFGKDARPVEGLPNLSCMEIDPEAAMSDLQQQASQYNNDPSDPMKNIMNDMTGSIPGIDEALSFMEVLKHIKNQKASDGDSDEKTVAYKTIIFDTAPTGHTLRFLQLPATLEKLLGKFKQLSGKLGPMLNMLGGGQQQDIFEKMNEIQKNVSEVNEQFTNPDLTTFVCVCISEFLSLYETERMIQELVSYNMDVNSIVVNQLLFADNDGSCKRCASRWKMQQKYLDQMAELYEDYHVVKMPLLGTEVRGIDNLKKFSKFLLSPYDPEKDGSLVFDMEEK.

K26–T33 is an ATP binding site. The active site involves D57. E241 and N268 together coordinate ATP. Zn(2+) contacts are provided by C279 and C282.

Belongs to the arsA ATPase family. Homodimer. Component of the Golgi to ER traffic (GET) complex, which is composed of GET1, GET2 and GET3. Within the complex, GET1 and GET2 form a heterotetramer which is stabilized by phosphatidylinositol binding and which binds to the GET3 homodimer. Interacts with the chloride channel protein GEF1.

The protein resides in the cytoplasm. The protein localises to the endoplasmic reticulum. Its subcellular location is the golgi apparatus. In terms of biological role, ATPase required for the post-translational delivery of tail-anchored (TA) proteins to the endoplasmic reticulum. Recognizes and selectively binds the transmembrane domain of TA proteins in the cytosol. This complex then targets to the endoplasmic reticulum by membrane-bound receptors GET1 and GET2, where the tail-anchored protein is released for insertion. This process is regulated by ATP binding and hydrolysis. ATP binding drives the homodimer towards the closed dimer state, facilitating recognition of newly synthesized TA membrane proteins. ATP hydrolysis is required for insertion. Subsequently, the homodimer reverts towards the open dimer state, lowering its affinity for the GET1-GET2 receptor, and returning it to the cytosol to initiate a new round of targeting. Cooperates with the HDEL receptor ERD2 to mediate the ATP-dependent retrieval of resident ER proteins that contain a C-terminal H-D-E-L retention signal from the Golgi to the ER. Involved in low-level resistance to the oxyanions arsenite and arsenate, and in heat tolerance. This is ATPase GET3 from Meyerozyma guilliermondii (strain ATCC 6260 / CBS 566 / DSM 6381 / JCM 1539 / NBRC 10279 / NRRL Y-324) (Yeast).